The primary structure comprises 83 residues: NAD(P)H-quinone oxidoreductase subunit L (83 aa).

Helical transmembrane passes span 15–35 and 53–73; these read LLVLLAYTVLGGLYLVVVPLA and LGIYGMVFFFFPGMILFAPFL.

The protein belongs to the complex I NdhL subunit family. As to quaternary structure, NDH-1 can be composed of about 15 different subunits; different subcomplexes with different compositions have been identified which probably have different functions.

It localises to the cellular thylakoid membrane. The catalysed reaction is a plastoquinone + NADH + (n+1) H(+)(in) = a plastoquinol + NAD(+) + n H(+)(out). It carries out the reaction a plastoquinone + NADPH + (n+1) H(+)(in) = a plastoquinol + NADP(+) + n H(+)(out). Functionally, NDH-1 shuttles electrons from an unknown electron donor, via FMN and iron-sulfur (Fe-S) centers, to quinones in the respiratory and/or the photosynthetic chain. The immediate electron acceptor for the enzyme in this species is believed to be plastoquinone. Couples the redox reaction to proton translocation, and thus conserves the redox energy in a proton gradient. Cyanobacterial NDH-1 also plays a role in inorganic carbon-concentration. In Synechococcus sp. (strain CC9605), this protein is NAD(P)H-quinone oxidoreductase subunit L.